Here is a 453-residue protein sequence, read N- to C-terminus: Putative folate transporter 2 (453 aa).

The next 11 helical transmembrane spans lie at 41–64 (IVVY…YYLF), 76–96 (SLIL…ALIT), 108–126 (PYLF…SLAL), 132–156 (IQAT…EALV), 176–195 (IASK…YFLE), 201–220 (YIFM…CLFL), 241–260 (FINT…YMSG), 280–300 (SFMG…IIVY), 312–330 (TLIF…PIIL), 346–366 (VLSG…PLFI), and 416–437 (LSMY…VPLL).

The protein belongs to the major facilitator superfamily. Folate-biopterin transporter (TC 2.A.71) family.

It localises to the plastid. The protein localises to the apicoplast. The protein resides in the membrane. Functionally, putative folate transporter. Required for sporogony of malaria parasites and host switching. This Plasmodium berghei (strain Anka) protein is Putative folate transporter 2.